The following is a 345-amino-acid chain: Low-density lipoprotein receptor class A domain-containing protein 3 (345 aa).

The signal sequence occupies residues 1–17 (MWLLGPLCLLLSSAAES). Topologically, residues 18-173 (QLLPGNNFTN…NQLVYYPSIT (156 aa)) are extracellular. Residue Asn24 is glycosylated (N-linked (GlcNAc...) asparagine). 3 consecutive LDL-receptor class A domains span residues 28–65 (ECNI…KECP), 70–107 (KCGP…ENCT), and 112–148 (LCST…ESCE). 9 disulfides stabilise this stretch: Cys29/Cys42, Cys37/Cys55, Cys49/Cys64, Cys71/Cys84, Cys78/Cys97, Cys91/Cys106, Cys113/Cys125, Cys120/Cys138, and Cys132/Cys147. The (Microbial infection) Interaction with Venezuelan equine encephalitis virus/VEEV spike proteins E1 and E2 stretch occupies residues 30 to 57 (NIPGNFMCSNGRCIPGAWQCDGLPDCFD). The chain crosses the membrane as a helical span at residues 174 to 194 (YAIIGSSVIFVLVVALLALVL). Topologically, residues 195 to 345 (HHQRKRNNLM…SEPSQGTEEV (151 aa)) are cytoplasmic. 2 consecutive short sequence motifs (involved in ITCH interaction) follow at residues 256–259 (PPSY) and 275–278 (PPPY). A disordered region spans residues 270-345 (WYDLPPPPYS…SEPSQGTEEV (76 aa)). Residues 295 to 313 (SRSGSANSASSQAASSLLS) are compositionally biased toward low complexity.

The protein belongs to the LDLR family. In terms of assembly, interacts with APP precursor C-terminus. Interacts directly with ITCH; this interaction promotes ITCH auto-ubiquitination leading to its degradation. Interacts directly with NEDD4; this interaction promotes NEDD4 auto-ubiquitination. Interacts directly with NEDD4L. As to quaternary structure, (Microbial infection) Interacts (via domain LDL-receptor class A 1) with Venezuelan equine encephalitis virus/VEEV spike proteins E1 and E2. Expressed at high levels in brain, lung, skeletal muscle, and pancreas. Expressed at moderate levels in heart, placenta, and kidney but not detected in the liver.

The protein resides in the cell membrane. Functionally, may influence APP processing, resulting in a decrease in sAPP-alpha production and increased amyloidogenic P3 peptide production. May regulate ITCH and NEDD4 E3 ligase activity and degradation. Its function is as follows. (Microbial infection) Acts as a receptor for Venezuelan equine encephalitis virus. In Homo sapiens (Human), this protein is Low-density lipoprotein receptor class A domain-containing protein 3.